The following is a 482-amino-acid chain: UDP-glycosyltransferase 86A2 (482 aa).

Residues S297, 355 to 357 (CCQ), 372 to 380 (HCGWNSILE), and 394 to 397 (LTDQ) contribute to the UDP-alpha-D-glucose site.

It belongs to the UDP-glycosyltransferase family.

This Arabidopsis thaliana (Mouse-ear cress) protein is UDP-glycosyltransferase 86A2 (UGT86A2).